Reading from the N-terminus, the 182-residue chain is Peptidyl-tRNA hydrolase (182 aa).

Y14 contributes to the tRNA binding site. H19 acts as the Proton acceptor in catalysis. 3 residues coordinate tRNA: F64, N66, and N112.

The protein belongs to the PTH family. Monomer.

It is found in the cytoplasm. The enzyme catalyses an N-acyl-L-alpha-aminoacyl-tRNA + H2O = an N-acyl-L-amino acid + a tRNA + H(+). Functionally, hydrolyzes ribosome-free peptidyl-tRNAs (with 1 or more amino acids incorporated), which drop off the ribosome during protein synthesis, or as a result of ribosome stalling. Its function is as follows. Catalyzes the release of premature peptidyl moieties from peptidyl-tRNA molecules trapped in stalled 50S ribosomal subunits, and thus maintains levels of free tRNAs and 50S ribosomes. In Wolbachia pipientis wMel, this protein is Peptidyl-tRNA hydrolase.